Here is a 229-residue protein sequence, read N- to C-terminus: Demethylmenaquinone methyltransferase (229 aa).

S-adenosyl-L-methionine contacts are provided by residues threonine 57, aspartate 77, and aspartate 101–valine 102.

Belongs to the class I-like SAM-binding methyltransferase superfamily. MenG/UbiE family.

The catalysed reaction is a 2-demethylmenaquinol + S-adenosyl-L-methionine = a menaquinol + S-adenosyl-L-homocysteine + H(+). It functions in the pathway quinol/quinone metabolism; menaquinone biosynthesis; menaquinol from 1,4-dihydroxy-2-naphthoate: step 2/2. Its function is as follows. Methyltransferase required for the conversion of demethylmenaquinol (DMKH2) to menaquinol (MKH2). The chain is Demethylmenaquinone methyltransferase from Chlamydia muridarum (strain MoPn / Nigg).